The chain runs to 331 residues: Phosphate acyltransferase (331 aa).

Belongs to the PlsX family. Homodimer. Probably interacts with PlsY.

The protein localises to the cytoplasm. It catalyses the reaction a fatty acyl-[ACP] + phosphate = an acyl phosphate + holo-[ACP]. The protein operates within lipid metabolism; phospholipid metabolism. Catalyzes the reversible formation of acyl-phosphate (acyl-PO(4)) from acyl-[acyl-carrier-protein] (acyl-ACP). This enzyme utilizes acyl-ACP as fatty acyl donor, but not acyl-CoA. The protein is Phosphate acyltransferase of Mesoplasma florum (strain ATCC 33453 / NBRC 100688 / NCTC 11704 / L1) (Acholeplasma florum).